Here is a 384-residue protein sequence, read N- to C-terminus: D-alanine--D-alanine ligase (384 aa).

The region spanning 167–374 (KKLFAAEGLP…YPTLLATMVD (208 aa)) is the ATP-grasp domain. 195–250 (CERLSLPVFVKPARGGSSIGISRVSSWGQLPSAIAYARRHDPKVIVEAAVNGRELE) is an ATP binding site. Residues D329, E341, and N343 each contribute to the Mg(2+) site.

Belongs to the D-alanine--D-alanine ligase family. Requires Mg(2+) as cofactor. The cofactor is Mn(2+).

It localises to the cytoplasm. The enzyme catalyses 2 D-alanine + ATP = D-alanyl-D-alanine + ADP + phosphate + H(+). Its pathway is cell wall biogenesis; peptidoglycan biosynthesis. Functionally, cell wall formation. This Mycobacterium leprae (strain TN) protein is D-alanine--D-alanine ligase.